The primary structure comprises 70 residues: MAFLKKSLFLVLFLALVPLSICEEEKREGENEKEQEDDNQSEEKRGLVSDLLSTVTGLLGNLGGGGLKKI.

A signal peptide spans 1 to 22; it reads MAFLKKSLFLVLFLALVPLSIC. Residues 23–45 constitute a propeptide that is removed on maturation; the sequence is EEEKREGENEKEQEDDNQSEEKR. Positions 25 to 45 are disordered; the sequence is EKREGENEKEQEDDNQSEEKR.

It belongs to the frog skin active peptide (FSAP) family. Plasticin subfamily. As to expression, expressed by the skin glands.

It is found in the secreted. In terms of biological role, the native peptide is a cationic amphipathic alpha-helical antimicrobial peptide with potent activity against both Gram-positive and Gram-negative bacteria. It has weak activity against fungi and shows low hemolytic activity. The polypeptide is Plasticin-S1 (Phyllomedusa sauvagei (Sauvage's leaf frog)).